The sequence spans 127 residues: Small ribosomal subunit protein uS11 (127 aa).

The protein belongs to the universal ribosomal protein uS11 family. As to quaternary structure, part of the 30S ribosomal subunit. Interacts with proteins S7 and S18. Binds to IF-3.

Its function is as follows. Located on the platform of the 30S subunit, it bridges several disparate RNA helices of the 16S rRNA. Forms part of the Shine-Dalgarno cleft in the 70S ribosome. The chain is Small ribosomal subunit protein uS11 from Streptococcus suis (strain 98HAH33).